We begin with the raw amino-acid sequence, 82 residues long: uncharacterized protein (82 aa).

3 helical membrane passes run 4-26, 31-50, and 55-77; these read IAVLFIVFGFPIVAGVFGIAGHF, FWVAPLIVLITSLILLVTLA, and SFIFWVVMYTAIALVTSVATLFL.

The protein resides in the cell membrane. This is an uncharacterized protein from Bacillus subtilis (strain 168).